We begin with the raw amino-acid sequence, 247 residues long: Aliphatic sulfonates import ATP-binding protein SsuB 3 (247 aa).

Positions Val-28–Leu-242 constitute an ABC transporter domain. Gly-60–Thr-67 lines the ATP pocket.

The protein belongs to the ABC transporter superfamily. Aliphatic sulfonates importer (TC 3.A.1.17.2) family. As to quaternary structure, the complex is composed of two ATP-binding proteins (SsuB), two transmembrane proteins (SsuC) and a solute-binding protein (SsuA).

The protein localises to the cell inner membrane. The enzyme catalyses ATP + H2O + aliphatic sulfonate-[sulfonate-binding protein]Side 1 = ADP + phosphate + aliphatic sulfonateSide 2 + [sulfonate-binding protein]Side 1.. Part of the ABC transporter complex SsuABC involved in aliphatic sulfonates import. Responsible for energy coupling to the transport system. This is Aliphatic sulfonates import ATP-binding protein SsuB 3 from Paraburkholderia xenovorans (strain LB400).